The primary structure comprises 335 residues: N-acetyl-gamma-glutamyl-phosphate reductase (335 aa).

C156 is an active-site residue.

This sequence belongs to the NAGSA dehydrogenase family. Type 1 subfamily.

The protein resides in the cytoplasm. The catalysed reaction is N-acetyl-L-glutamate 5-semialdehyde + phosphate + NADP(+) = N-acetyl-L-glutamyl 5-phosphate + NADPH + H(+). It participates in amino-acid biosynthesis; L-arginine biosynthesis; N(2)-acetyl-L-ornithine from L-glutamate: step 3/4. Catalyzes the NADPH-dependent reduction of N-acetyl-5-glutamyl phosphate to yield N-acetyl-L-glutamate 5-semialdehyde. The protein is N-acetyl-gamma-glutamyl-phosphate reductase of Aeromonas hydrophila subsp. hydrophila (strain ATCC 7966 / DSM 30187 / BCRC 13018 / CCUG 14551 / JCM 1027 / KCTC 2358 / NCIMB 9240 / NCTC 8049).